The sequence spans 292 residues: Phosphatidylserine decarboxylase proenzyme (292 aa).

Catalysis depends on charge relay system; for autoendoproteolytic cleavage activity residues Asp-89, His-146, and Ser-252. The Schiff-base intermediate with substrate; via pyruvic acid; for decarboxylase activity role is filled by Ser-252. At Ser-252 the chain carries Pyruvic acid (Ser); by autocatalysis.

It belongs to the phosphatidylserine decarboxylase family. PSD-B subfamily. Prokaryotic type I sub-subfamily. In terms of assembly, heterodimer of a large membrane-associated beta subunit and a small pyruvoyl-containing alpha subunit. Pyruvate serves as cofactor. Is synthesized initially as an inactive proenzyme. Formation of the active enzyme involves a self-maturation process in which the active site pyruvoyl group is generated from an internal serine residue via an autocatalytic post-translational modification. Two non-identical subunits are generated from the proenzyme in this reaction, and the pyruvate is formed at the N-terminus of the alpha chain, which is derived from the carboxyl end of the proenzyme. The autoendoproteolytic cleavage occurs by a canonical serine protease mechanism, in which the side chain hydroxyl group of the serine supplies its oxygen atom to form the C-terminus of the beta chain, while the remainder of the serine residue undergoes an oxidative deamination to produce ammonia and the pyruvoyl prosthetic group on the alpha chain. During this reaction, the Ser that is part of the protease active site of the proenzyme becomes the pyruvoyl prosthetic group, which constitutes an essential element of the active site of the mature decarboxylase.

Its subcellular location is the cell membrane. It carries out the reaction a 1,2-diacyl-sn-glycero-3-phospho-L-serine + H(+) = a 1,2-diacyl-sn-glycero-3-phosphoethanolamine + CO2. It participates in phospholipid metabolism; phosphatidylethanolamine biosynthesis; phosphatidylethanolamine from CDP-diacylglycerol: step 2/2. Catalyzes the formation of phosphatidylethanolamine (PtdEtn) from phosphatidylserine (PtdSer). This Shewanella sp. (strain MR-4) protein is Phosphatidylserine decarboxylase proenzyme.